The chain runs to 467 residues: Light-independent protochlorophyllide reductase subunit N (467 aa).

Residues C23, C48, and C108 each coordinate [4Fe-4S] cluster.

This sequence belongs to the BchN/ChlN family. In terms of assembly, protochlorophyllide reductase is composed of three subunits; ChlL, ChlN and ChlB. Forms a heterotetramer of two ChlB and two ChlN subunits. The cofactor is [4Fe-4S] cluster.

The enzyme catalyses chlorophyllide a + oxidized 2[4Fe-4S]-[ferredoxin] + 2 ADP + 2 phosphate = protochlorophyllide a + reduced 2[4Fe-4S]-[ferredoxin] + 2 ATP + 2 H2O. It functions in the pathway porphyrin-containing compound metabolism; chlorophyll biosynthesis (light-independent). Its function is as follows. Component of the dark-operative protochlorophyllide reductase (DPOR) that uses Mg-ATP and reduced ferredoxin to reduce ring D of protochlorophyllide (Pchlide) to form chlorophyllide a (Chlide). This reaction is light-independent. The NB-protein (ChlN-ChlB) is the catalytic component of the complex. The chain is Light-independent protochlorophyllide reductase subunit N from Nostoc sp. (strain PCC 7120 / SAG 25.82 / UTEX 2576).